We begin with the raw amino-acid sequence, 269 residues long: 5'-nucleotidase SurE (269 aa).

Residues Asp-11, Asp-12, Ser-43, and Asn-101 each contribute to the a divalent metal cation site.

This sequence belongs to the SurE nucleotidase family. Requires a divalent metal cation as cofactor.

It is found in the cytoplasm. The catalysed reaction is a ribonucleoside 5'-phosphate + H2O = a ribonucleoside + phosphate. Its function is as follows. Nucleotidase that shows phosphatase activity on nucleoside 5'-monophosphates. The polypeptide is 5'-nucleotidase SurE (Synechococcus sp. (strain CC9902)).